Reading from the N-terminus, the 33-residue chain is Neurotoxin Nk-3FTx (33 aa).

Disulfide bonds link cysteine 3–cysteine 24 and cysteine 6–cysteine 11.

In terms of tissue distribution, expressed by the venom gland.

It is found in the secreted. Functionally, possible voltage-gated potassium channel (Kv) blocker. Decreases amplitude of compound action potential and conduction velocity in toad sciatic nerve. Has only mild anticoagulant activity even at a concentration of 5ug/ml. Shows no cytotoxicity towards human cell lines. In Naja kaouthia (Monocled cobra), this protein is Neurotoxin Nk-3FTx.